Reading from the N-terminus, the 274-residue chain is Undecaprenyl-diphosphatase (274 aa).

A run of 6 helical transmembrane segments spans residues 44-64 (AKVF…LVYW), 85-105 (LNVL…GKAI), 109-129 (LFTP…ILWA), 185-205 (ATDY…VYSL), 215-235 (ADIP…WLCV), and 250-270 (FAWY…SGLV).

It belongs to the UppP family.

It localises to the cell inner membrane. The enzyme catalyses di-trans,octa-cis-undecaprenyl diphosphate + H2O = di-trans,octa-cis-undecaprenyl phosphate + phosphate + H(+). Its function is as follows. Catalyzes the dephosphorylation of undecaprenyl diphosphate (UPP). Confers resistance to bacitracin. The chain is Undecaprenyl-diphosphatase from Acidovorax ebreus (strain TPSY) (Diaphorobacter sp. (strain TPSY)).